Here is a 205-residue protein sequence, read N- to C-terminus: MDLKLLNDQGQAATFSAPDTIFGRDFNEALVHQIVVAFQANARSGNRAQKDRAEVKHSTKKPWRQKGTGRARAGMTSSPLWRGGGRAFPNSPEENFSQKVNKKMYRAGIRSILSQLAREDRVAVVDTFTLESPKTKLAAAKLKSLGLDSVLIITDNVDENVYLATRNLPYVAVVEPRYADPLSLIHYKKVLITKPAIAQLEEMLG.

The disordered stretch occupies residues 43-95; sequence RSGNRAQKDRAEVKHSTKKPWRQKGTGRARAGMTSSPLWRGGGRAFPNSPEEN. The span at 48–57 shows a compositional bias: basic and acidic residues; the sequence is AQKDRAEVKH. The span at 58–69 shows a compositional bias: basic residues; it reads STKKPWRQKGTG.

This sequence belongs to the universal ribosomal protein uL4 family. Part of the 50S ribosomal subunit.

One of the primary rRNA binding proteins, this protein initially binds near the 5'-end of the 23S rRNA. It is important during the early stages of 50S assembly. It makes multiple contacts with different domains of the 23S rRNA in the assembled 50S subunit and ribosome. Its function is as follows. Forms part of the polypeptide exit tunnel. The protein is Large ribosomal subunit protein uL4 of Bordetella pertussis (strain Tohama I / ATCC BAA-589 / NCTC 13251).